Here is a 279-residue protein sequence, read N- to C-terminus: Putative colanic acid biosynthesis glycosyl transferase WcaA (279 aa).

To R.meliloti ExoO.

It participates in slime biogenesis; slime polysaccharide biosynthesis. In Escherichia coli (strain K12), this protein is Putative colanic acid biosynthesis glycosyl transferase WcaA (wcaA).